A 171-amino-acid polypeptide reads, in one-letter code: Adenine phosphoribosyltransferase (171 aa).

The protein belongs to the purine/pyrimidine phosphoribosyltransferase family. Homodimer.

The protein resides in the cytoplasm. The enzyme catalyses AMP + diphosphate = 5-phospho-alpha-D-ribose 1-diphosphate + adenine. It participates in purine metabolism; AMP biosynthesis via salvage pathway; AMP from adenine: step 1/1. Functionally, catalyzes a salvage reaction resulting in the formation of AMP, that is energically less costly than de novo synthesis. The chain is Adenine phosphoribosyltransferase from Rhodospirillum centenum (strain ATCC 51521 / SW).